Reading from the N-terminus, the 957-residue chain is Glycine dehydrogenase (decarboxylating) 2 (957 aa).

K707 carries the post-translational modification N6-(pyridoxal phosphate)lysine.

Belongs to the GcvP family. In terms of assembly, the glycine cleavage system is composed of four proteins: P, T, L and H. Requires pyridoxal 5'-phosphate as cofactor.

The catalysed reaction is N(6)-[(R)-lipoyl]-L-lysyl-[glycine-cleavage complex H protein] + glycine + H(+) = N(6)-[(R)-S(8)-aminomethyldihydrolipoyl]-L-lysyl-[glycine-cleavage complex H protein] + CO2. The glycine cleavage system catalyzes the degradation of glycine. The P protein binds the alpha-amino group of glycine through its pyridoxal phosphate cofactor; CO(2) is released and the remaining methylamine moiety is then transferred to the lipoamide cofactor of the H protein. The polypeptide is Glycine dehydrogenase (decarboxylating) 2 (Pseudomonas fluorescens (strain Pf0-1)).